Consider the following 124-residue polypeptide: Small ribosomal subunit protein bS6 (124 aa).

It belongs to the bacterial ribosomal protein bS6 family.

Functionally, binds together with bS18 to 16S ribosomal RNA. This is Small ribosomal subunit protein bS6 from Chromobacterium violaceum (strain ATCC 12472 / DSM 30191 / JCM 1249 / CCUG 213 / NBRC 12614 / NCIMB 9131 / NCTC 9757 / MK).